The following is a 529-amino-acid chain: Bifunctional purine biosynthesis protein PurH (529 aa).

In terms of domain architecture, MGS-like spans 1 to 148 (MQQRRPVRRA…KNHKDVAIVV (148 aa)).

It belongs to the PurH family.

It catalyses the reaction (6R)-10-formyltetrahydrofolate + 5-amino-1-(5-phospho-beta-D-ribosyl)imidazole-4-carboxamide = 5-formamido-1-(5-phospho-D-ribosyl)imidazole-4-carboxamide + (6S)-5,6,7,8-tetrahydrofolate. The enzyme catalyses IMP + H2O = 5-formamido-1-(5-phospho-D-ribosyl)imidazole-4-carboxamide. Its pathway is purine metabolism; IMP biosynthesis via de novo pathway; 5-formamido-1-(5-phospho-D-ribosyl)imidazole-4-carboxamide from 5-amino-1-(5-phospho-D-ribosyl)imidazole-4-carboxamide (10-formyl THF route): step 1/1. It functions in the pathway purine metabolism; IMP biosynthesis via de novo pathway; IMP from 5-formamido-1-(5-phospho-D-ribosyl)imidazole-4-carboxamide: step 1/1. This chain is Bifunctional purine biosynthesis protein PurH, found in Salmonella typhi.